The chain runs to 499 residues: Bifunctional purine biosynthesis protein PurH (499 aa).

The MGS-like domain occupies 1-144 (MIKRALISVF…KNFKDVVVLT (144 aa)).

The protein belongs to the PurH family.

It catalyses the reaction (6R)-10-formyltetrahydrofolate + 5-amino-1-(5-phospho-beta-D-ribosyl)imidazole-4-carboxamide = 5-formamido-1-(5-phospho-D-ribosyl)imidazole-4-carboxamide + (6S)-5,6,7,8-tetrahydrofolate. The catalysed reaction is IMP + H2O = 5-formamido-1-(5-phospho-D-ribosyl)imidazole-4-carboxamide. The protein operates within purine metabolism; IMP biosynthesis via de novo pathway; 5-formamido-1-(5-phospho-D-ribosyl)imidazole-4-carboxamide from 5-amino-1-(5-phospho-D-ribosyl)imidazole-4-carboxamide (10-formyl THF route): step 1/1. Its pathway is purine metabolism; IMP biosynthesis via de novo pathway; IMP from 5-formamido-1-(5-phospho-D-ribosyl)imidazole-4-carboxamide: step 1/1. The protein is Bifunctional purine biosynthesis protein PurH of Clostridium botulinum (strain Hall / ATCC 3502 / NCTC 13319 / Type A).